Here is a 320-residue protein sequence, read N- to C-terminus: Putative polysaccharide deacetylase (320 aa).

The NodB homology domain occupies 69 to 303; that stretch reads RSIESCFEYG…ITSKEGVWVA (235 aa).

It belongs to the polysaccharide deacetylase family. As to quaternary structure, homodimer.

The protein localises to the prospore. Its function is as follows. May deacetylate chitin. Required for spore formation. This is Putative polysaccharide deacetylase from Schizosaccharomyces pombe (strain 972 / ATCC 24843) (Fission yeast).